A 245-amino-acid polypeptide reads, in one-letter code: Small ribosomal subunit protein uS2 (245 aa).

Belongs to the universal ribosomal protein uS2 family.

This Pseudomonas fluorescens (strain ATCC BAA-477 / NRRL B-23932 / Pf-5) protein is Small ribosomal subunit protein uS2.